A 169-amino-acid chain; its full sequence is Cell cycle link protein (169 aa).

The tract at residues 9 to 22 (LPEELREKIVHDHL) is binding to host SKP1 protein. The short motif at 110–114 (LSCRE) is the LXCXE motif, interaction with host RBR element.

This sequence belongs to the nanovirus Clink protein family. As to quaternary structure, interacts with host SKP1. Interacts (via LXCXE domain) with host retinoblastoma-related protein 1 (RBR1). Interacts (via LXCXE domain) with retinoblastoma-related proteins (RBR).

Functionally, interacts with and disrupts the function of host retinoblastoma-related proteins RBR, which are key regulators of the cell cycle. Induces transcriptional activation of E2F-regulated S-phase and G2/M-phase-specific genes. Inactivation of the ability of RBR to arrest the cell cycle leads to the stimulation of viral DNA replication. The chain is Cell cycle link protein (DNA-C) from Faba bean necrotic yellows virus (isolate Egyptian EV1-93) (FBNYV).